Consider the following 2073-residue polypeptide: Histone acetyltransferase KAT6B (2073 aa).

One can recognise an SAMD1-like winged helix (WH) domain in the interval 1–77 (MVKLANPLYT…LASYKDPDNP (77 aa)). The interval 72–97 (KDPDNPGRFSSVKPGTFPKSAKGSRG) is disordered. An H15 domain is found at 103–176 (RNVDWNKLLR…KDGPQYRVNY (74 aa)). 2 PHD-type zinc fingers span residues 213-272 (IPIC…CKTC) and 269-320 (CKTC…CRPK). S355 bears the Phosphoserine mark. 4 disordered regions span residues 360 to 409 (EGSM…RPGA), 442 to 531 (FTPS…VPSL), 553 to 583 (TQGQ…TAKS), and 639 to 663 (VTPQ…PDQD). Residues 361–717 (GSMNAFTGRG…ECESGVEDCG (357 aa)) form a negatively regulates HAT activity region. Positions 379–399 (KVCTTPSSGHAASGKDSSSRL) are enriched in polar residues. Positions 447–460 (DGRRSRGEIIDFSK) are enriched in basic and acidic residues. Polar residues predominate over residues 470-485 (QKQSCTSHVLATGTTQ). The span at 488–499 (KPPPSSLPPPTP) shows a compositional bias: pro residues. Positions 501–531 (SGQSPSSQKSSTATSSPSPQSSSSQCSVPSL) are enriched in low complexity. At S647 the chain carries Phosphoserine. K673 is covalently cross-linked (Glycyl lysine isopeptide (Lys-Gly) (interchain with G-Cter in SUMO2)). The MYST-type HAT domain maps to 715 to 989 (DCGRYPSVIE…LDPDSLRWTP (275 aa)). A catalytic region spans residues 718–1008 (RYPSVIEFGK…EEEREAEKEA (291 aa)). The C2HC MYST-type zinc finger occupies 748-773 (LYLCEFCLKYMKSKNILLRHSKKCGW). Positions 752-1008 (EFCLKYMKSK…EEEREAEKEA (257 aa)) are interaction with BRPF1. K815 carries the N6-acetyllysine; by autocatalysis modification. Acetyl-CoA contacts are provided by residues 856–860 (SCIMI) and 865–871 (QRQGFGR). The Proton donor/acceptor role is filled by E891. Residue S895 participates in acetyl-CoA binding. Disordered stretches follow at residues 1022 to 1452 (EQEI…FKEV), 1484 to 1538 (SCNS…MEID), and 1580 to 1619 (QSPQ…SPSV). The span at 1025-1043 (ILSTRANSRQSPAKVQSKN) shows a compositional bias: polar residues. N6-acetyllysine is present on residues K1038, K1042, and K1044. S1048 bears the Phosphoserine mark. Residues 1069-1105 (SEEEEEEEDEEEEEEEEEEEEDEEEEEEEEEEEEEEN) show a composition bias toward acidic residues. Over residues 1106 to 1117 (IQSSPPRLTKPQ) the composition is skewed to polar residues. Residues 1121–1140 (IKRKRPFVLKKKRGRKRRRI) show a composition bias toward basic residues. Residues 1142–1155 (SSVTTETISETTEV) are compositionally biased toward low complexity. The span at 1187–1200 (PVLRKAFQHQPGKK) shows a compositional bias: basic residues. 3 stretches are compositionally biased toward basic and acidic residues: residues 1229–1243 (SNLK…EPLK), 1306–1315 (RIEEEVKETG), and 1341–1350 (EKPEDDLIKP). Acidic residues predominate over residues 1351–1374 (EEEEEEEEEEEEEEEEEEGEEEEG). Basic and acidic residues-rich tracts occupy residues 1378–1390 (VEKD…SQEK) and 1396–1407 (STEKEDSARLDD). Residues 1408–1417 (HEEEEEEDEE) show a composition bias toward acidic residues. The segment covering 1433-1452 (HMESAEVEKEELPRESFKEV) has biased composition (basic and acidic residues). Positions 1498 to 1507 (AVPESDEEPP) are enriched in acidic residues. The span at 1513–1529 (QKQDQKNSKEVDTEFKE) shows a compositional bias: basic and acidic residues. The interval 1560 to 2073 (QDCAETQEAC…QSLNGSYMRR (514 aa)) is interaction with RUNX1 and RUNX2. Residues 1580–1591 (QSPQIATTLDDC) show a composition bias toward polar residues. Over residues 1594–1611 (SDHSSPVSSVHSHPGQSV) the composition is skewed to low complexity.

Belongs to the MYST (SAS/MOZ) family. As to quaternary structure, component of the MOZ/MORF complex composed at least of ING5, KAT6A, KAT6B, MEAF6 and one of BRPF1, BRD1/BRPF2 and BRPF3. Interacts with RUNX1 and RUNX2. Autoacetylated. Autoacetylation at Lys-815 is required for proper function. As to expression, ubiquitously expressed, with high levels in heart, pancreas, testis and ovary.

It is found in the nucleus. It catalyses the reaction L-lysyl-[protein] + acetyl-CoA = N(6)-acetyl-L-lysyl-[protein] + CoA + H(+). Histone acetyltransferase which may be involved in both positive and negative regulation of transcription. Required for RUNX2-dependent transcriptional activation. May be involved in cerebral cortex development. Component of the MOZ/MORF complex which has a histone H3 acetyltransferase activity. The sequence is that of Histone acetyltransferase KAT6B (KAT6B) from Homo sapiens (Human).